A 552-amino-acid polypeptide reads, in one-letter code: Chaperonin GroEL (552 aa).

Residues 30–33, Lys-51, 87–91, Gly-415, and Asp-499 contribute to the ATP site; these read TLGP and DGTTT.

It belongs to the chaperonin (HSP60) family. Forms a cylinder of 14 subunits composed of two heptameric rings stacked back-to-back. Interacts with the co-chaperonin GroES.

Its subcellular location is the cytoplasm. It carries out the reaction ATP + H2O + a folded polypeptide = ADP + phosphate + an unfolded polypeptide.. Its function is as follows. Together with its co-chaperonin GroES, plays an essential role in assisting protein folding. The GroEL-GroES system forms a nano-cage that allows encapsulation of the non-native substrate proteins and provides a physical environment optimized to promote and accelerate protein folding. In Hamiltonella defensa subsp. Acyrthosiphon pisum (strain 5AT), this protein is Chaperonin GroEL.